A 222-amino-acid chain; its full sequence is Nucleoside triphosphate pyrophosphatase (222 aa).

The active-site Proton acceptor is the Asp-82.

Belongs to the Maf family. It depends on a divalent metal cation as a cofactor.

It is found in the cytoplasm. The catalysed reaction is a ribonucleoside 5'-triphosphate + H2O = a ribonucleoside 5'-phosphate + diphosphate + H(+). It carries out the reaction a 2'-deoxyribonucleoside 5'-triphosphate + H2O = a 2'-deoxyribonucleoside 5'-phosphate + diphosphate + H(+). Functionally, nucleoside triphosphate pyrophosphatase. May have a dual role in cell division arrest and in preventing the incorporation of modified nucleotides into cellular nucleic acids. The polypeptide is Nucleoside triphosphate pyrophosphatase (Mycobacterium bovis (strain ATCC BAA-935 / AF2122/97)).